A 358-amino-acid chain; its full sequence is Alanine racemase (358 aa).

Catalysis depends on Lys35, which acts as the Proton acceptor; specific for D-alanine. At Lys35 the chain carries N6-(pyridoxal phosphate)lysine. Substrate is bound at residue Arg130. Tyr255 serves as the catalytic Proton acceptor; specific for L-alanine. Met303 provides a ligand contact to substrate.

It belongs to the alanine racemase family. Requires pyridoxal 5'-phosphate as cofactor.

The enzyme catalyses L-alanine = D-alanine. Its pathway is amino-acid biosynthesis; D-alanine biosynthesis; D-alanine from L-alanine: step 1/1. Functionally, catalyzes the interconversion of L-alanine and D-alanine. May also act on other amino acids. The chain is Alanine racemase (alr) from Shewanella baltica (strain OS185).